We begin with the raw amino-acid sequence, 142 residues long: Hemoglobin subunit alpha-A (142 aa).

A Globin domain is found at Val-2–Arg-142. Position 59 (His-59) interacts with O2. His-88 contributes to the heme b binding site.

The protein belongs to the globin family. In terms of assembly, heterotetramer of two alpha chains and two beta chains. In terms of tissue distribution, red blood cells.

Involved in oxygen transport from the lung to the various peripheral tissues. In Columba livia (Rock dove), this protein is Hemoglobin subunit alpha-A (HBAA).